The following is an 837-amino-acid chain: MAQALSEEEFQRMQTQLLELRTNNYQLSDELRKNGVELSSLRQKVAYLDKEFSKAQKALSKSKKAQEVEVLLSEKEMLQAKLHSQEEDFRLQNSTLMAEFSKLCSQLEQLELENRQLKEGVPGAAGPHVDGELLRLQAENTALQKNMAALQERYGKEAVRPSAVSEGQGDPPGDVLPISLSPMPLAEVELKWEMEREEKKLLWEQLQGLESSKQAETSRLQEELAKLSEKLKKKQESFCRLQTEKETLFNDSRNKIEELQQRKEADLKAQLARTQKLQQELEAANQSLAELRDQRQGERLEHAAALRALQDQVSSQSADAQEQVEGLLAENNALRTSLAALEQIQTAKTQELNMLREQNTELAAELKHRQADYEELMGQKDDLNSQLQESLRANSRLLEQLQEMGQEKEQLIQDLQEARKSAEKRKVMLDELAMETLQEKSQHKEELGAVRLRHEKEMLGVRARYERELRELHEDKKRQEEELRGQIREEKARTRELENLQHTVEELQAQVHSMDGAKGWFERRLKEAEESLLQQEQEQEETLKQCREQHAAELKGKEEELQNVRDQLQQAQEERDGHVKTISNLKQEVKDTVDGQRILEKKGSAVLKDLKRQLHLERKRADKLQERLQEILTNSKSRTGLEELVLSEMNSPSRTQTGDSSSVSSFSYREILKEKESSAIPARSLSSSPQAQPPRPAELSDEEVAELFQRLAETQQEKWMLEEKVKHLEVSSASMAEDLCRKSAIIETYVMDSRIDVSVAAGHTDRSGLGSVLRDLVKPGDENLREMNKKLQNMLEEQLTKNMHLHKDMEVLSQEIVRLSKECVGSPDPDLEPGEAN.

Residue alanine 2 is modified to N-acetylalanine. Residues 4 to 158 (ALSEEEFQRM…ALQERYGKEA (155 aa)) are a coiled coil. Disordered stretches follow at residues 161 to 180 (PSAV…PISL), 555 to 577 (KGKE…ERDG), 647 to 666 (SEMN…VSSF), and 677 to 702 (SSAI…LSDE). Residues 204–637 (EQLQGLESSK…LQEILTNSKS (434 aa)) are a coiled coil. The span at 648–666 (EMNSPSRTQTGDSSSVSSF) shows a compositional bias: polar residues. Residues serine 651, serine 662, serine 664, serine 665, serine 684, serine 686, serine 687, and serine 688 each carry the phosphoserine modification. Residues 678-690 (SAIPARSLSSSPQ) show a composition bias toward low complexity. 2 coiled-coil regions span residues 697-731 (AELS…LEVS) and 781-810 (DENL…KDME). At serine 826 the chain carries Phosphoserine.

As to quaternary structure, interacts with GRIP1, GRIP2 and AMPA receptors. Interacts (via C-terminus) with MAPK8/JNK1 and with MAP3K1/MEKK1; the interaction promotes MAP3K1-mediated phosphorylation of MAPK8. Interacts (via N-terminus) with RAB4A (in GTP-bound form). Interacts (via C-terminus) with STX12. Post-translationally, proteolytically cleaved by caspase-3. A minor C-terminal proteolytic fragment of 30 kDa is produced. Proteolytic cleavage is required for JNK signaling activation. Expressed in the central nervous system; especially in neurons.

It localises to the early endosome membrane. The protein localises to the recycling endosome membrane. Its subcellular location is the cell projection. It is found in the axon. The protein resides in the dendrite. It localises to the synapse. Functionally, regulates the endosomal recycling back to the neuronal plasma membrane, possibly by connecting early and late recycling endosomal domains and promoting segregation of recycling endosomes from early endosomal membranes. Involved in the localization of recycling endosomes to dendritic spines, thereby playing a role in the maintenance of dendritic spine morphology. Required for the activity-induced AMPA receptor recycling to dendrite membranes and for long-term potentiation and synaptic plasticity. In terms of biological role, functions as a scaffold protein in neurons to facilitate MAP3K1/MEKK1-mediated activation of the JNK1 kinase by phosphorylation, possibly by bringing MAP3K1/MEKK1 and JNK1 in close proximity. The protein is GRIP1-associated protein 1 (Gripap1) of Rattus norvegicus (Rat).